A 108-amino-acid chain; its full sequence is Ig kappa chain V-V region HP 124E1 (108 aa).

The framework-1 stretch occupies residues 1 to 23 (DIQMTQTTSSLSASLGDRVTISC). C23 and C88 are disulfide-bonded. A complementarity-determining-1 region spans residues 24-34 (RASQDINNYLN). Residues 35–49 (WYQQKPDGTVKLLIY) are framework-2. Residues 50-56 (YTSRLHS) form a complementarity-determining-2 region. A framework-3 region spans residues 57–88 (GVPSRFSGSGSGTDYSLTISNLEQEDIATYFC). A complementarity-determining-3 region spans residues 89–97 (QQGKTLPRT). The tract at residues 98–108 (FGGGTKLEIKR) is framework-4.

The chain is Ig kappa chain V-V region HP 124E1 from Mus musculus (Mouse).